Here is a 351-residue protein sequence, read N- to C-terminus: Large ribosomal subunit protein uL3 (351 aa).

2 disordered regions span residues 1-31 (MGHR…TPRT) and 246-271 (KGSR…GQLG).

Belongs to the universal ribosomal protein uL3 family. Part of the 50S ribosomal subunit. Forms a cluster with proteins L14 and L24e.

One of the primary rRNA binding proteins, it binds directly near the 3'-end of the 23S rRNA, where it nucleates assembly of the 50S subunit. This Saccharolobus islandicus (strain M.16.27) (Sulfolobus islandicus) protein is Large ribosomal subunit protein uL3.